Here is a 320-residue protein sequence, read N- to C-terminus: tRNA dimethylallyltransferase (320 aa).

Residue 5–12 participates in ATP binding; sequence GPTAVGKS. Substrate is bound at residue 7-12; sequence TAVGKS. Residues 30 to 33 form an interaction with substrate tRNA region; it reads DSMQ.

This sequence belongs to the IPP transferase family. In terms of assembly, monomer. Mg(2+) serves as cofactor.

It catalyses the reaction adenosine(37) in tRNA + dimethylallyl diphosphate = N(6)-dimethylallyladenosine(37) in tRNA + diphosphate. Its function is as follows. Catalyzes the transfer of a dimethylallyl group onto the adenine at position 37 in tRNAs that read codons beginning with uridine, leading to the formation of N6-(dimethylallyl)adenosine (i(6)A). The protein is tRNA dimethylallyltransferase of Heliobacterium modesticaldum (strain ATCC 51547 / Ice1).